Consider the following 420-residue polypeptide: Glucose-1-phosphate adenylyltransferase (420 aa).

Alpha-D-glucose 1-phosphate-binding positions include tyrosine 107, glycine 172, 187–188 (EK), and serine 205.

It belongs to the bacterial/plant glucose-1-phosphate adenylyltransferase family. In terms of assembly, homotetramer.

The catalysed reaction is alpha-D-glucose 1-phosphate + ATP + H(+) = ADP-alpha-D-glucose + diphosphate. It participates in glycan biosynthesis; glycogen biosynthesis. Functionally, involved in the biosynthesis of ADP-glucose, a building block required for the elongation reactions to produce glycogen. Catalyzes the reaction between ATP and alpha-D-glucose 1-phosphate (G1P) to produce pyrophosphate and ADP-Glc. This chain is Glucose-1-phosphate adenylyltransferase, found in Rhizobium leguminosarum bv. trifolii (strain WSM2304).